The chain runs to 543 residues: Chaperonin GroEL (543 aa).

ATP contacts are provided by residues 29–32, Lys50, 86–90, Gly413, 480–482, and Asp496; these read TLGP, DGTTT, and NAA. Positions 524 to 543 are disordered; sequence EKPEKKESTPASAGAGDMDF.

It belongs to the chaperonin (HSP60) family. In terms of assembly, forms a cylinder of 14 subunits composed of two heptameric rings stacked back-to-back. Interacts with the co-chaperonin GroES.

The protein localises to the cytoplasm. The catalysed reaction is ATP + H2O + a folded polypeptide = ADP + phosphate + an unfolded polypeptide.. In terms of biological role, together with its co-chaperonin GroES, plays an essential role in assisting protein folding. The GroEL-GroES system forms a nano-cage that allows encapsulation of the non-native substrate proteins and provides a physical environment optimized to promote and accelerate protein folding. This chain is Chaperonin GroEL, found in Thermus thermophilus (strain ATCC BAA-163 / DSM 7039 / HB27).